Consider the following 674-residue polypeptide: Zinc finger protein 750 (674 aa).

Residues 25–51 (YKCFQCPFTCNEKSHLFNHMKYGLCKN) form a CCHC-type zinc finger. Zn(2+) contacts are provided by Cys-27, Cys-30, His-43, and Cys-49. Disordered stretches follow at residues 105 to 125 (EAKENLDLKNEPKSHAEKTTV), 370 to 466 (LAKN…QSHS), and 594 to 674 (TSSP…PRVS). Composition is skewed to polar residues over residues 401–411 (SPTNFTQSSQG) and 444–466 (DSQTIISRENSPSFGNDGVQSHS).

Its subcellular location is the nucleus. Transcription factor involved in epidermis differentiation. The polypeptide is Zinc finger protein 750 (znf750) (Xenopus laevis (African clawed frog)).